A 447-amino-acid chain; its full sequence is Tubulin beta-5 chain (447 aa).

8 residues coordinate GTP: glutamine 11, glutamate 69, serine 138, glycine 142, threonine 143, glycine 144, asparagine 204, and asparagine 226. Glutamate 69 lines the Mg(2+) pocket. The disordered stretch occupies residues 424 to 447; that stretch reads QYQDATAEEEGEFDEDEELDDAMG. Residues 429-447 are compositionally biased toward acidic residues; sequence TAEEEGEFDEDEELDDAMG.

It belongs to the tubulin family. Dimer of alpha and beta chains. A typical microtubule is a hollow water-filled tube with an outer diameter of 25 nm and an inner diameter of 15 nM. Alpha-beta heterodimers associate head-to-tail to form protofilaments running lengthwise along the microtubule wall with the beta-tubulin subunit facing the microtubule plus end conferring a structural polarity. Microtubules usually have 13 protofilaments but different protofilament numbers can be found in some organisms and specialized cells. The cofactor is Mg(2+).

The protein resides in the cytoplasm. Its subcellular location is the cytoskeleton. Tubulin is the major constituent of microtubules, a cylinder consisting of laterally associated linear protofilaments composed of alpha- and beta-tubulin heterodimers. Microtubules grow by the addition of GTP-tubulin dimers to the microtubule end, where a stabilizing cap forms. Below the cap, tubulin dimers are in GDP-bound state, owing to GTPase activity of alpha-tubulin. The polypeptide is Tubulin beta-5 chain (TUBB5) (Ectocarpus variabilis (Brown alga)).